The chain runs to 279 residues: NADH dehydrogenase [ubiquinone] iron-sulfur protein 3, mitochondrial (279 aa).

Residues 1–27 (MISRTLLKRSLPTVQFLRPFTRSSIRR) constitute a mitochondrion transit peptide. The interval 249 to 279 (EPVGEGKDFTPESFKLPTPEPEPEKESDEKK) is disordered. Positions 270 to 279 (EPEKESDEKK) are enriched in basic and acidic residues.

Belongs to the complex I 30 kDa subunit family. In terms of assembly, core subunit of respiratory chain NADH dehydrogenase (Complex I).

It localises to the mitochondrion inner membrane. The catalysed reaction is a ubiquinone + NADH + 5 H(+)(in) = a ubiquinol + NAD(+) + 4 H(+)(out). In terms of biological role, core subunit of the mitochondrial membrane respiratory chain NADH dehydrogenase (Complex I) which catalyzes electron transfer from NADH through the respiratory chain, using ubiquinone as an electron acceptor. Plays a role in cell wall integrity and is involved in osmotic and oxidative resistance, yeast to hypha transition and the ability to damage and invade oral epithelial cells. This is NADH dehydrogenase [ubiquinone] iron-sulfur protein 3, mitochondrial (ALI1) from Candida albicans (strain SC5314 / ATCC MYA-2876) (Yeast).